The primary structure comprises 339 residues: Large ribosomal subunit protein uL10 (339 aa).

The interval 300-339 (AAAQATPSVEEREEEEKPEEEEEEEEKEEEAIEGLGALFG) is disordered. Acidic residues predominate over residues 310–331 (EREEEEKPEEEEEEEEKEEEAI).

It belongs to the universal ribosomal protein uL10 family. Part of the 50S ribosomal subunit. Forms part of the ribosomal stalk which helps the ribosome interact with GTP-bound translation factors. Forms a heptameric L10(L12)2(L12)2(L12)2 complex, where L10 forms an elongated spine to which the L12 dimers bind in a sequential fashion.

Functionally, forms part of the ribosomal stalk, playing a central role in the interaction of the ribosome with GTP-bound translation factors. The sequence is that of Large ribosomal subunit protein uL10 from Archaeoglobus fulgidus (strain ATCC 49558 / DSM 4304 / JCM 9628 / NBRC 100126 / VC-16).